The chain runs to 1040 residues: MSTVLPESNATSRIPANDPALEKVDSEHGVEYAREKFGTALRGDRAGLKFESKFCPDDGRTPFATTAWDLRSAAIKDESGNALFEQTDCEVPASWSQLATNVVVSKYFYGDPKNTDERERSVRQLIHRVTRTISDWGLADGYFDTPEDGERFYRDLTWLSLHQHGAFNSPVWFNVGLHAQYDVEGDMCNWHWDRTENTTAQPDNPYEYPQGSACFIQSVDDNMEDIMRLACSEAMLFKFGSGTGTDLSTIRSQREKLSGGGTPSGPLSFMRVYDSIAGVVKSGGKTRRAAKMQSLKVWHPDILEFIECKWAEEKKAHALIREGYDSNFNGEAYASVCFQNANLSVRLTDDYMEAVRKNENFQTRWITDKPTTEPPSYVAKELLNKMAECAWHCGDPGVQYDTTINKWHTCPNSGAINASNPCSEYMFLDDTACNLASINLMKFVQQDGSFDHERFRAACRTFFIAQEILVDHASYPTEPIARNSHKFRPLGLGYSNLGSVIMTAGLPYDSDAARGMCGSLTALLHGEANRTSAELASVVGTFDGYVENEAPMLRVMQMHRDACDQINDDGPAELKEAARELWDGVLEIGEKYGFRNAQATVLAPTGTISFMMDCDTTGIEPDIALVKYKQLAGGGMLKIVNQTVKLGLKTLGYDADTIDEILKYVDANDTIEGAPGLQDEHLAVFDCAFKPANGVRSIGWRAHITMMAAAQPFLSGAISKTVNMPTDVTPQDIADAYFWGWELGLKAIAIYRDGSKQSQPLNTKSDEQKATDAAEAAKVETVEKIVYKPRRERLPDTRQSLTHKFSIAGHEGYLCVGLYPDGRPGEMFITMAKEGSTIGGIMDSFGTALSIAMQYGVPLEVIVNKFSHTRFEPMGHTSNKDIRIAKSVVDYIARWLGITFMSGNDYSPSAEGAAKTGGNGPDLTTAPAGATANNNSPVMAELRADAGAAVALVERATLLASLQNGVSNGSATNGHSNGQSAGGSSDGAVAERAVDGLGGQADQFSRFQTDAPSCDNCGSITVRNGNCYLCHNCGNSMGCS.

Substrate contacts are provided by residues Ser169, Ala213–Cys214, Gly242, Asn420–Glu424, and Pro604–Ile608. Cys214 and Cys433 are disulfide-bonded. The Proton acceptor role is filled by Asn420. Catalysis depends on Cys422, which acts as the Cysteine radical intermediate. Glu424 acts as the Proton acceptor in catalysis. Disordered stretches follow at residues Ser909–Ala932 and Gly969–Ala988. Over residues Gly969–Gln979 the composition is skewed to polar residues.

It belongs to the ribonucleoside diphosphate reductase class-2 family. Adenosylcob(III)alamin is required as a cofactor.

The enzyme catalyses a 2'-deoxyribonucleoside 5'-diphosphate + [thioredoxin]-disulfide + H2O = a ribonucleoside 5'-diphosphate + [thioredoxin]-dithiol. In terms of biological role, catalyzes the reduction of ribonucleotides to deoxyribonucleotides. May function to provide a pool of deoxyribonucleotide precursors for DNA repair during oxygen limitation and/or for immediate growth after restoration of oxygen. The protein is Vitamin B12-dependent ribonucleotide reductase (nrdJ) of Rhodopirellula baltica (strain DSM 10527 / NCIMB 13988 / SH1).